Consider the following 464-residue polypeptide: Eukaryotic translation initiation factor 5 (464 aa).

Position 9 is a phosphoserine (serine 9). 28 to 35 (GKGNGIKT) contributes to the GTP binding site. Disordered regions lie at residues 145 to 203 (NPPS…ASQT) and 409 to 464 (EEES…IDDI). A compositionally biased stretch (polar residues) spans 174 to 184 (ADGSMTNNSLA). The region spanning 254-415 (DKTEKERIDI…KNAEEESSES (162 aa)) is the W2 domain. Acidic residues-rich tracts occupy residues 410–427 (EESS…EEDN) and 451–464 (GDED…IDDI). Residues serine 412, serine 413, and serine 415 each carry the phosphoserine modification.

This sequence belongs to the eIF-2-beta/eIF-5 family.

Catalyzes the hydrolysis of GTP bound to the 40S ribosomal initiation complex (40S.mRNA.Met-tRNA[F].eIF-2.GTP) with the subsequent joining of a 60S ribosomal subunit resulting in the release of eIF-2 and the guanine nucleotide. The subsequent joining of a 60S ribosomal subunit results in the formation of a functional 80S initiation complex (80S.mRNA.Met-tRNA[F]). The protein is Eukaryotic translation initiation factor 5 (eIF5) of Drosophila melanogaster (Fruit fly).